A 1520-amino-acid polypeptide reads, in one-letter code: DNA-directed RNA polymerase subunit beta'' (1520 aa).

Residues C220, C296, C303, and C306 each coordinate Zn(2+). Basic and acidic residues-rich tracts occupy residues T645 to E654 and P664 to E674. Disordered regions lie at residues T645–E676 and Y705–G786. 2 stretches are compositionally biased toward acidic residues: residues G730–D748 and T756–D779.

Belongs to the RNA polymerase beta' chain family. RpoC2 subfamily. As to quaternary structure, in plastids the minimal PEP RNA polymerase catalytic core is composed of four subunits: alpha, beta, beta', and beta''. When a (nuclear-encoded) sigma factor is associated with the core the holoenzyme is formed, which can initiate transcription. The cofactor is Zn(2+).

It localises to the plastid. The protein localises to the chloroplast. It carries out the reaction RNA(n) + a ribonucleoside 5'-triphosphate = RNA(n+1) + diphosphate. Functionally, DNA-dependent RNA polymerase catalyzes the transcription of DNA into RNA using the four ribonucleoside triphosphates as substrates. In Sorghum bicolor (Sorghum), this protein is DNA-directed RNA polymerase subunit beta''.